The following is a 362-amino-acid chain: Isopentenyl-diphosphate delta-isomerase (362 aa).

6–7 serves as a coordination point for substrate; that stretch reads RK. FMN-binding positions include 65–67, Ser95, and Asn124; that span reads SIT. 95-97 serves as a coordination point for substrate; that stretch reads SQR. Gln158 contributes to the substrate binding site. Glu159 lines the Mg(2+) pocket. Residues Lys189, Thr219, 269–271, and 290–291 each bind FMN; these read GVR and AL.

This sequence belongs to the IPP isomerase type 2 family. In terms of assembly, homooctamer. Dimer of tetramers. FMN is required as a cofactor. It depends on NADPH as a cofactor. The cofactor is Mg(2+).

It is found in the cytoplasm. It carries out the reaction isopentenyl diphosphate = dimethylallyl diphosphate. In terms of biological role, involved in the biosynthesis of isoprenoids. Catalyzes the 1,3-allylic rearrangement of the homoallylic substrate isopentenyl (IPP) to its allylic isomer, dimethylallyl diphosphate (DMAPP). The sequence is that of Isopentenyl-diphosphate delta-isomerase from Methanococcoides burtonii (strain DSM 6242 / NBRC 107633 / OCM 468 / ACE-M).